Reading from the N-terminus, the 605-residue chain is UvrABC system protein C (605 aa).

Residues 14 to 92 (QSCGVYKMVG…IKSLKPLYNI (79 aa)) enclose the GIY-YIG domain. The UVR domain occupies 202–237 (KEVKEQLLFTMRKCSSEENYELAAIYRDRVKFLEQI).

It belongs to the UvrC family. Interacts with UvrB in an incision complex.

Its subcellular location is the cytoplasm. Its function is as follows. The UvrABC repair system catalyzes the recognition and processing of DNA lesions. UvrC both incises the 5' and 3' sides of the lesion. The N-terminal half is responsible for the 3' incision and the C-terminal half is responsible for the 5' incision. The protein is UvrABC system protein C of Wolbachia pipientis wMel.